The following is a 100-amino-acid chain: uncharacterized protein (100 aa).

Residues 1-100 form the HTH arsR-type domain; sequence MEPIEVFKAL…KLADFLKTEI (100 aa). The H-T-H motif DNA-binding region spans 44 to 67; that stretch reads VSQITDKLKMTQSTASQYLTILLR.

This is an uncharacterized protein from Bacillus subtilis (strain 168).